The primary structure comprises 522 residues: Calcium-dependent protein kinase 14 (522 aa).

Low complexity-rich tracts occupy residues 1 to 12 and 19 to 45; these read MGNCCPPGSSSE and SSGS…AAPA. Residues 1-58 are disordered; that stretch reads MGNCCPPGSSSEPDPPPASSGSSRPAGSAGAAASPATISPSAAPAPAKPPAPIGPVLG. A lipid anchor (N-myristoyl glycine) is attached at Gly-2. Residues 68-326 form the Protein kinase domain; the sequence is YTVGKELGRG…AYDVLNHPWI (259 aa). ATP-binding positions include 74-82 and Lys-97; that span reads LGRGQFGVT. The Proton acceptor role is filled by Asp-192. The autoinhibitory domain stretch occupies residues 332-362; the sequence is APDTPLDNAVLGRLKQFRAMNQFKKAALRVI. EF-hand domains are found at residues 369–404, 405–440, 441–476, and 480–511; these read EEIR…KGTK, LTEA…MNRM, DREE…KGLM, and EIKD…GDPE. Residues Asp-382, Asp-384, Ser-386, Thr-388, Glu-393, Asp-418, Asp-420, Asn-422, Thr-424, Glu-429, Asp-454, Asp-456, Ser-458, Tyr-460, Glu-465, Asp-489, Asp-491, Asp-493, Arg-495, and Glu-500 each coordinate Ca(2+).

The protein belongs to the protein kinase superfamily. Ser/Thr protein kinase family. CDPK subfamily.

Its subcellular location is the membrane. It carries out the reaction L-seryl-[protein] + ATP = O-phospho-L-seryl-[protein] + ADP + H(+). The catalysed reaction is L-threonyl-[protein] + ATP = O-phospho-L-threonyl-[protein] + ADP + H(+). Its activity is regulated as follows. Activated by calcium. Autophosphorylation may play an important role in the regulation of the kinase activity. Functionally, may play a role in signal transduction pathways that involve calcium as a second messenger. The protein is Calcium-dependent protein kinase 14 of Oryza sativa subsp. japonica (Rice).